We begin with the raw amino-acid sequence, 314 residues long: Ribosomal RNA small subunit methyltransferase H (314 aa).

Residues 32–34 (GGH), D52, F79, D100, and Q107 contribute to the S-adenosyl-L-methionine site.

It belongs to the methyltransferase superfamily. RsmH family.

Its subcellular location is the cytoplasm. It carries out the reaction cytidine(1402) in 16S rRNA + S-adenosyl-L-methionine = N(4)-methylcytidine(1402) in 16S rRNA + S-adenosyl-L-homocysteine + H(+). In terms of biological role, specifically methylates the N4 position of cytidine in position 1402 (C1402) of 16S rRNA. The chain is Ribosomal RNA small subunit methyltransferase H from Shouchella clausii (strain KSM-K16) (Alkalihalobacillus clausii).